A 293-amino-acid chain; its full sequence is Protease HtpX (293 aa).

2 consecutive transmembrane segments (helical) span residues 4-24 (IALF…VLSL) and 34-54 (GLMI…LLMS). His-139 lines the Zn(2+) pocket. Glu-140 is a catalytic residue. His-143 contacts Zn(2+). The next 2 helical transmembrane spans lie at 158–178 (VVNT…AGFM) and 193–213 (LIYF…ASII). Residue Glu-222 participates in Zn(2+) binding.

The protein belongs to the peptidase M48B family. The cofactor is Zn(2+).

The protein resides in the cell inner membrane. The sequence is that of Protease HtpX from Escherichia coli (strain ATCC 8739 / DSM 1576 / NBRC 3972 / NCIMB 8545 / WDCM 00012 / Crooks).